The following is a 156-amino-acid chain: Small ribosomal subunit protein uS7c (156 aa).

This sequence belongs to the universal ribosomal protein uS7 family. Part of the 30S ribosomal subunit.

It localises to the plastid. The protein resides in the chloroplast. One of the primary rRNA binding proteins, it binds directly to 16S rRNA where it nucleates assembly of the head domain of the 30S subunit. This chain is Small ribosomal subunit protein uS7c (rps7), found in Pyropia yezoensis (Susabi-nori).